The sequence spans 310 residues: Olfactory receptor 10N1 (310 aa).

Residues 1–23 lie on the Extracellular side of the membrane; that stretch reads MDNYTLLNEFILLGIPQTQGLET. Asparagine 3 is a glycosylation site (N-linked (GlcNAc...) asparagine). Residues 24-44 traverse the membrane as a helical segment; sequence LLFVVFLFIYFFTLLGNSLIF. The Cytoplasmic segment spans residues 45-55; that stretch reads TAIISSSTLHT. The helical transmembrane segment at 56 to 76 threads the bilayer; it reads PMYFFLGLLSVFDMLFPSVTC. The Extracellular segment spans residues 77 to 95; the sequence is PKMLFYLSVRSPAISYKGC. Cysteines 95 and 187 form a disulfide. The chain crosses the membrane as a helical span at residues 96 to 116; that stretch reads AAQLFFYHLLGSTEGCLYSVM. Residues 117-136 are Cytoplasmic-facing; the sequence is AYDRYVAICHPLRYMLIMKP. The chain crosses the membrane as a helical span at residues 137–157; it reads GVCVSLVIIAWLVGCLHATIL. Residues 158 to 202 lie on the Extracellular side of the membrane; that stretch reads TSLTFQLVYCASNQVDYFFCDLPAVLPLACTDSKLARKVGSINVG. A helical transmembrane segment spans residues 203–223; sequence FLALMLLFSVCVSYVHIGVAI. Residues 224-237 are Cytoplasmic-facing; that stretch reads LRIRSAEGRQKAFS. The chain crosses the membrane as a helical span at residues 238-258; sequence TCSAHLTAILCAYGPVIIIYL. Residues 259–264 lie on the Extracellular side of the membrane; it reads QRTPNP. Residues 265–285 form a helical membrane-spanning segment; sequence LLGAVVQILNNIVSPMLNSLI. At 286–310 the chain is on the cytoplasmic side; that stretch reads YSLRNKEVKRSLRRVFQNITFHGQK.

This sequence belongs to the G-protein coupled receptor 1 family.

The protein resides in the cell membrane. In terms of biological role, odorant receptor. The polypeptide is Olfactory receptor 10N1 (Mus musculus (Mouse)).